Consider the following 345-residue polypeptide: Eukaryotic translation initiation factor 3 subunit F (345 aa).

The 137-residue stretch at 30–166 (VVIHPQALFS…TRAYISAPVG (137 aa)) folds into the MPN domain. Positions 308–345 (GGESGNAESGQRGGQRGGKGGRGGQQRTQDRSGEEARA) are disordered. The segment covering 318-331 (QRGGQRGGKGGRGG) has biased composition (gly residues). Over residues 335-345 (TQDRSGEEARA) the composition is skewed to basic and acidic residues.

Belongs to the eIF-3 subunit F family. As to quaternary structure, component of the eukaryotic translation initiation factor 3 (eIF-3) complex.

The protein resides in the cytoplasm. Functionally, component of the eukaryotic translation initiation factor 3 (eIF-3) complex, which is involved in protein synthesis of a specialized repertoire of mRNAs and, together with other initiation factors, stimulates binding of mRNA and methionyl-tRNAi to the 40S ribosome. The eIF-3 complex specifically targets and initiates translation of a subset of mRNAs involved in cell proliferation. The sequence is that of Eukaryotic translation initiation factor 3 subunit F from Aspergillus oryzae (strain ATCC 42149 / RIB 40) (Yellow koji mold).